A 136-amino-acid chain; its full sequence is Probable flagellum biosynthesis repressor protein FlbT 2 (136 aa).

The protein belongs to the FlbT family.

In terms of biological role, has a post-transcriptional repressor function in flagellum biogenesis. Associates with the 5'-UTR of fljK mRNA and promotes its degradation. In Bradyrhizobium diazoefficiens (strain JCM 10833 / BCRC 13528 / IAM 13628 / NBRC 14792 / USDA 110), this protein is Probable flagellum biosynthesis repressor protein FlbT 2.